Reading from the N-terminus, the 51-residue chain is MVAYWRQAGLSYIRFSQICAKAVRDALKTEFKANAEKTSGTSIKTVKIKKE.

3 positions are modified to N6-acetyllysine; alternate: K21, K32, and K37. 3 positions are modified to N6-succinyllysine; alternate: K21, K32, and K37. An N6-acetyllysine modification is found at K44.

Belongs to the eukaryotic ATPase epsilon family. In terms of assembly, component of the ATP synthase complex composed at least of ATP5F1A/subunit alpha, ATP5F1B/subunit beta, ATP5MC1/subunit c (homooctomer), MT-ATP6/subunit a, MT-ATP8/subunit 8, ATP5ME/subunit e, ATP5MF/subunit f, ATP5MG/subunit g, ATP5MK/subunit k, ATP5MJ/subunit j, ATP5F1C/subunit gamma, ATP5F1D/subunit delta, ATP5F1E/subunit epsilon, ATP5PF/subunit F6, ATP5PB/subunit b, ATP5PD/subunit d, ATP5PO/subunit OSCP. ATP synthase complex consists of a soluble F(1) head domain (subunits alpha(3) and beta(3)) - the catalytic core - and a membrane F(0) domain - the membrane proton channel (subunits c, a, 8, e, f, g, k and j). These two domains are linked by a central stalk (subunits gamma, delta, and epsilon) rotating inside the F1 region and a stationary peripheral stalk (subunits F6, b, d, and OSCP).

It localises to the mitochondrion. It is found in the mitochondrion inner membrane. Functionally, subunit epsilon, of the mitochondrial membrane ATP synthase complex (F(1)F(0) ATP synthase or Complex V) that produces ATP from ADP in the presence of a proton gradient across the membrane which is generated by electron transport complexes of the respiratory chain. ATP synthase complex consist of a soluble F(1) head domain - the catalytic core - and a membrane F(1) domain - the membrane proton channel. These two domains are linked by a central stalk rotating inside the F(1) region and a stationary peripheral stalk. During catalysis, ATP synthesis in the catalytic domain of F(1) is coupled via a rotary mechanism of the central stalk subunits to proton translocation. In vivo, can only synthesize ATP although its ATP hydrolase activity can be activated artificially in vitro. May be essential for the assembly of F(1) and may play an important role in the incorporation of the hydrophobic subunit c into the F(1)-c oligomer rotor of the mitochondrial ATP synthase complex. This chain is ATP synthase F(1) complex subunit epsilon, mitochondrial, found in Rattus norvegicus (Rat).